The following is a 468-amino-acid chain: Siroheme synthase 1 (468 aa).

Residues 1–204 form a precorrin-2 dehydrogenase /sirohydrochlorin ferrochelatase region; sequence MDYLPIFCRL…GDKASANQLA (204 aa). Residues 22 to 23 and 43 to 44 each bind NAD(+); these read EV and PA. Position 128 is a phosphoserine (S128). The segment at 216-468 is uroporphyrinogen-III C-methyltransferase; sequence GEVILVGAGP…NHGVQAAALA (253 aa). P225 provides a ligand contact to S-adenosyl-L-methionine. The active-site Proton acceptor is D248. K270 acts as the Proton donor in catalysis. S-adenosyl-L-methionine contacts are provided by residues 301-303, I306, 331-332, M383, and G412; these read GGD and TA.

In the N-terminal section; belongs to the precorrin-2 dehydrogenase / sirohydrochlorin ferrochelatase family. This sequence in the C-terminal section; belongs to the precorrin methyltransferase family.

The enzyme catalyses uroporphyrinogen III + 2 S-adenosyl-L-methionine = precorrin-2 + 2 S-adenosyl-L-homocysteine + H(+). It carries out the reaction precorrin-2 + NAD(+) = sirohydrochlorin + NADH + 2 H(+). The catalysed reaction is siroheme + 2 H(+) = sirohydrochlorin + Fe(2+). The protein operates within cofactor biosynthesis; adenosylcobalamin biosynthesis; precorrin-2 from uroporphyrinogen III: step 1/1. It participates in cofactor biosynthesis; adenosylcobalamin biosynthesis; sirohydrochlorin from precorrin-2: step 1/1. It functions in the pathway porphyrin-containing compound metabolism; siroheme biosynthesis; precorrin-2 from uroporphyrinogen III: step 1/1. Its pathway is porphyrin-containing compound metabolism; siroheme biosynthesis; siroheme from sirohydrochlorin: step 1/1. The protein operates within porphyrin-containing compound metabolism; siroheme biosynthesis; sirohydrochlorin from precorrin-2: step 1/1. Multifunctional enzyme that catalyzes the SAM-dependent methylations of uroporphyrinogen III at position C-2 and C-7 to form precorrin-2 via precorrin-1. Then it catalyzes the NAD-dependent ring dehydrogenation of precorrin-2 to yield sirohydrochlorin. Finally, it catalyzes the ferrochelation of sirohydrochlorin to yield siroheme. The chain is Siroheme synthase 1 from Aeromonas salmonicida (strain A449).